The primary structure comprises 237 residues: Chloride intracellular channel protein 3 (237 aa).

The required for insertion into the membrane stretch occupies residues 1-89; it reads MAETTKLQLF…EEFLEETLGP (89 aa). One can recognise a GST N-terminal domain in the interval 13 to 91; that stretch reads ASEDGESVGH…FLEETLGPPD (79 aa). The G-site signature appears at 23 to 26; it reads CPSC. A disulfide bond links Cys23 and Cys26. Residues 25 to 45 form a helical membrane-spanning segment; it reads SCQRLFMVLLLKGVPFTLTTV. The GST C-terminal domain occupies 69 to 236; the sequence is DGDVKTDTLQ…LAAYQPAVHP (168 aa). Ser160 bears the Phosphoserine mark.

It belongs to the chloride channel CLIC family. In terms of assembly, associated with the C-terminal of MAPK15.

It localises to the nucleus. It is found in the membrane. The protein localises to the cell membrane. Its subcellular location is the cytoplasm. The protein resides in the secreted. It localises to the extracellular space. It is found in the extracellular matrix. The enzyme catalyses chloride(in) = chloride(out). In the soluble state, catalyzes glutaredoxin-like thiol disulfide exchange reactions with reduced glutathione as electron donor. Reduced in a glutathione-dependent way and secreted into the extracellular matrix where it activates TGM2 and promotes blood vessel growth during tissue remodeling as occurs in tumorigenesis. Can reduce specific cysteines in TGM2 and regulate cofactor binding. Can insert into membranes and form outwardly rectifying chloride ion channels. May participate in cellular growth control. This Mus musculus (Mouse) protein is Chloride intracellular channel protein 3.